A 502-amino-acid polypeptide reads, in one-letter code: ATP synthase subunit alpha (502 aa).

169–176 (GDRQTGKT) is a binding site for ATP.

The protein belongs to the ATPase alpha/beta chains family. In terms of assembly, F-type ATPases have 2 components, CF(1) - the catalytic core - and CF(0) - the membrane proton channel. CF(1) has five subunits: alpha(3), beta(3), gamma(1), delta(1), epsilon(1). CF(0) has three main subunits: a(1), b(2) and c(9-12). The alpha and beta chains form an alternating ring which encloses part of the gamma chain. CF(1) is attached to CF(0) by a central stalk formed by the gamma and epsilon chains, while a peripheral stalk is formed by the delta and b chains.

The protein localises to the cell membrane. It catalyses the reaction ATP + H2O + 4 H(+)(in) = ADP + phosphate + 5 H(+)(out). Produces ATP from ADP in the presence of a proton gradient across the membrane. The alpha chain is a regulatory subunit. This chain is ATP synthase subunit alpha, found in Staphylococcus aureus (strain Mu3 / ATCC 700698).